A 116-amino-acid chain; its full sequence is Transcription initiation factor IIA subunit 2 (116 aa).

Belongs to the TFIIA subunit 2 family. TFIIA is a heterodimer composed of the large TOA1 and the small TOA2 subunits.

The protein resides in the nucleus. In terms of biological role, TFIIA is a component of the transcription machinery of RNA polymerase II and plays an important role in transcriptional activation. TFIIA in a complex with tbp mediates transcriptional activity. This Pyricularia oryzae (strain 70-15 / ATCC MYA-4617 / FGSC 8958) (Rice blast fungus) protein is Transcription initiation factor IIA subunit 2 (TOA2).